Reading from the N-terminus, the 230-residue chain is Cytidylate kinase (230 aa).

12–20 (GPSGAGKGT) lines the ATP pocket.

The protein belongs to the cytidylate kinase family. Type 1 subfamily.

The protein localises to the cytoplasm. It catalyses the reaction CMP + ATP = CDP + ADP. The catalysed reaction is dCMP + ATP = dCDP + ADP. In Shewanella sp. (strain MR-7), this protein is Cytidylate kinase.